We begin with the raw amino-acid sequence, 363 residues long: Putative agmatine deiminase 1 (363 aa).

Cysteine 356 (amidino-cysteine intermediate) is an active-site residue.

This sequence belongs to the agmatine deiminase family.

It catalyses the reaction agmatine + H2O = N-carbamoylputrescine + NH4(+). The polypeptide is Putative agmatine deiminase 1 (Listeria monocytogenes serovar 1/2a (strain ATCC BAA-679 / EGD-e)).